Here is a 325-residue protein sequence, read N- to C-terminus: Flotillin-like protein FloA (325 aa).

Helical transmembrane passes span 4 to 24 (LGIV…FSFI) and 26 to 46 (VGLW…TLVA).

Belongs to the flotillin-like FloA family. Homooligomerizes.

The protein localises to the cell membrane. The protein resides in the membrane raft. Functionally, found in functional membrane microdomains (FMM) that may be equivalent to eukaryotic membrane rafts. FMMs are highly dynamic and increase in number as cells age. Flotillins are thought to be important factors in membrane fluidity. The polypeptide is Flotillin-like protein FloA (Thermus thermophilus (strain ATCC BAA-163 / DSM 7039 / HB27)).